The sequence spans 276 residues: NH(3)-dependent NAD(+) synthetase (276 aa).

46-53 (GISGGQDS) contributes to the ATP binding site. Residue D52 coordinates Mg(2+). Residue R140 coordinates deamido-NAD(+). T160 serves as a coordination point for ATP. Residue E165 participates in Mg(2+) binding. K173 and D180 together coordinate deamido-NAD(+). ATP-binding residues include K189 and T211. 260–261 (HK) serves as a coordination point for deamido-NAD(+).

This sequence belongs to the NAD synthetase family. In terms of assembly, homodimer.

The enzyme catalyses deamido-NAD(+) + NH4(+) + ATP = AMP + diphosphate + NAD(+) + H(+). Its pathway is cofactor biosynthesis; NAD(+) biosynthesis; NAD(+) from deamido-NAD(+) (ammonia route): step 1/1. Catalyzes the ATP-dependent amidation of deamido-NAD to form NAD. Uses ammonia as a nitrogen source. In Citrobacter koseri (strain ATCC BAA-895 / CDC 4225-83 / SGSC4696), this protein is NH(3)-dependent NAD(+) synthetase.